Here is a 145-residue protein sequence, read N- to C-terminus: Cell division protein SepF (145 aa).

Positions 23–41 (PQEVSKTKDENAKPKHETP) are enriched in basic and acidic residues. Positions 23–42 (PQEVSKTKDENAKPKHETPK) are disordered.

It belongs to the SepF family. Homodimer. Interacts with FtsZ.

The protein localises to the cytoplasm. Cell division protein that is part of the divisome complex and is recruited early to the Z-ring. Probably stimulates Z-ring formation, perhaps through the cross-linking of FtsZ protofilaments. Its function overlaps with FtsA. In Caldicellulosiruptor bescii (strain ATCC BAA-1888 / DSM 6725 / KCTC 15123 / Z-1320) (Anaerocellum thermophilum), this protein is Cell division protein SepF.